The sequence spans 384 residues: S-adenosylmethionine synthase (384 aa).

An ATP-binding site is contributed by His-15. Mg(2+) is bound at residue Asp-17. Glu-43 is a binding site for K(+). L-methionine contacts are provided by Glu-56 and Gln-99. Residues 99–109 form a flexible loop region; it reads QSPDINQGVDK. Residues 164 to 166, 230 to 231, Asp-239, 245 to 246, Ala-262, and Lys-266 contribute to the ATP site; these read DAK, RF, and RK. Asp-239 lines the L-methionine pocket. Lys-270 is a binding site for L-methionine.

Belongs to the AdoMet synthase family. Homotetramer; dimer of dimers. Mg(2+) serves as cofactor. Requires K(+) as cofactor.

It localises to the cytoplasm. It carries out the reaction L-methionine + ATP + H2O = S-adenosyl-L-methionine + phosphate + diphosphate. It participates in amino-acid biosynthesis; S-adenosyl-L-methionine biosynthesis; S-adenosyl-L-methionine from L-methionine: step 1/1. Functionally, catalyzes the formation of S-adenosylmethionine (AdoMet) from methionine and ATP. The overall synthetic reaction is composed of two sequential steps, AdoMet formation and the subsequent tripolyphosphate hydrolysis which occurs prior to release of AdoMet from the enzyme. This is S-adenosylmethionine synthase from Aliivibrio salmonicida (strain LFI1238) (Vibrio salmonicida (strain LFI1238)).